A 2148-amino-acid chain; its full sequence is Polyketide synthase 1 (2148 aa).

Residues 19–261 form an N-terminal acylcarrier protein transacylase domain (SAT) region; sequence FIFGDQSSCN…TPLAVHAPYH (243 aa). The 436-residue stretch at 394-829 folds into the Ketosynthase family 3 (KS3) domain; it reads ESKIAIIGMS…GGNTALLVED (436 aa). Residues cysteine 566, histidine 701, and histidine 745 each act as for beta-ketoacyl synthase activity in the active site. A malonyl-CoA:ACP transacylase (MAT) domain region spans residues 930–1236; the sequence is FVFSGQGSQY…MRNKDGWQVL (307 aa). Residue serine 1018 is the For acyl/malonyl transferase activity of the active site. The interval 1310–1624 is product template (PT) domain; that stretch reads TASVHRMVHE…RKVLNTAMPP (315 aa). An N-terminal hotdog fold region spans residues 1314–1447; it reads HRMVHESVEK…SSLHFEQPKV (134 aa). One can recognise a PKS/mFAS DH domain in the interval 1314–1619; that stretch reads HRMVHESVEK…FQGIPRKVLN (306 aa). Catalysis depends on histidine 1346, which acts as the Proton acceptor; for dehydratase activity. The interval 1474–1619 is C-terminal hotdog fold; sequence LNSRMSSGVI…FQGIPRKVLN (146 aa). Aspartate 1533 acts as the Proton donor; for dehydratase activity in catalysis. Positions 1619–1655 are disordered; sequence NTAMPPPKSQNEAPVRSGPAKPAAKPPRSASSEHSGH. Residues 1634-1650 show a composition bias toward low complexity; sequence RSGPAKPAAKPPRSASS. The 75-residue stretch at 1678 to 1752 folds into the Carrier 1 domain; it reads RNPMLPVFKI…DLAAQLGLDT (75 aa). Serine 1712 carries the O-(pantetheine 4'-phosphoryl)serine modification. The segment covering 1755 to 1790 has biased composition (low complexity); that stretch reads SDQSSGQSSSSGGLSPRSDSIGEITSSVTTPPSLSP. The tract at residues 1755-1796 is disordered; it reads SDQSSGQSSSSGGLSPRSDSIGEITSSVTTPPSLSPRGSVSG. The Carrier 2 domain occupies 1793-1870; it reads SVSGSQCKDV…SFKHMFQQGH (78 aa). The residue at position 1830 (serine 1830) is an O-(pantetheine 4'-phosphoryl)serine. Positions 1882-2146 are thioesterase (TE) domain; that stretch reads LKQYRATSTL…ERVAAFIRST (265 aa). Catalysis depends on serine 1973, which acts as the For thioesterase activity.

Its pathway is pigment biosynthesis. Functionally, polyketide synthase; part of the Pks1 gene cluster that mediates the biosynthesis of an anthraquinone derivative pigment that contributes to conidial pigmentation that provides protection from UV radiation, heat and cold stress. The polyketide synthase Pks1 produces 1-acetyl-2,4,6,8-tetrahydroxy-9,10-anthraquinone though condensation of acetyl-CoA with malonyl-CoA. The dehydratase EthD and the laccase Mlac1 further convert the anthraquinone derivative into the final conidial pigment. The protein is Polyketide synthase 1 of Metarhizium robertsii (strain ARSEF 23 / ATCC MYA-3075) (Metarhizium anisopliae (strain ARSEF 23)).